Consider the following 618-residue polypeptide: UvrABC system protein C (618 aa).

The GIY-YIG domain maps to threonine 20–valine 98. Residues aspartate 207–methionine 242 enclose the UVR domain.

Belongs to the UvrC family. Interacts with UvrB in an incision complex.

It is found in the cytoplasm. Functionally, the UvrABC repair system catalyzes the recognition and processing of DNA lesions. UvrC both incises the 5' and 3' sides of the lesion. The N-terminal half is responsible for the 3' incision and the C-terminal half is responsible for the 5' incision. In Xanthomonas campestris pv. campestris (strain B100), this protein is UvrABC system protein C.